Reading from the N-terminus, the 1268-residue chain is SR-related and CTD-associated factor 8 (1268 aa).

The 139-residue stretch at 1–139 (MEAVKTFNSE…PLLDMAAGIP (139 aa)) folds into the CID domain. Thr-6 is subject to Phosphothreonine. Residue Lys-18 forms a Glycyl lysine isopeptide (Lys-Gly) (interchain with G-Cter in SUMO1) linkage. Basic and acidic residues predominate over residues 270-283 (GEDSEHSEESKKEM). Disordered regions lie at residues 270–290 (GEDS…QLSH), 322–355 (QQQP…QQHF), and 385–469 (EIFE…PVRS). Ser-273 is modified (phosphoserine). The segment covering 327–354 (KVTPQDSQEGTFGSEHSASPSQGSSQQH) has biased composition (polar residues). A compositionally biased stretch (basic residues) spans 394–443 (VAVRSRSRTHSRSRSRSPRKRRSRSRSGSRKRKHRKRSRSHSREKKRKAS). Over residues 447–461 (SSERRAREREKERQK) the composition is skewed to basic and acidic residues. The RRM domain maps to 477–551 (TTLWVGQVDK…KVIKIAWALN (75 aa)). Ser-617 is subject to Phosphoserine. The disordered stretch occupies residues 776–807 (QIPSGENTRPVIPSDIPSSAAMLAQPPGASST). 3 positions are modified to asymmetric dimethylarginine: Arg-915, Arg-925, and Arg-936. 2 disordered regions span residues 984 to 1012 (PGRP…EGDR) and 1040 to 1065 (RLDP…PVDM). Position 1071 is an asymmetric dimethylarginine (Arg-1071). The segment at 1199 to 1268 (ATSQRKGDNV…VVESTETEGT (70 aa)) is disordered. The span at 1249-1262 (GTVAGVESEAVVES) shows a compositional bias: low complexity.

As to quaternary structure, interacts with POLR2A; via C-terminal heptapeptide repeat domain (CTD) phosphorylated at 'Ser-2' and 'Ser-5'. Identified in a complex with CDC5L and other spliceosomal proteins.

It is found in the nucleus. The protein localises to the nucleus matrix. In terms of biological role, anti-terminator protein required to prevent early mRNA termination during transcription. Together with SCAF4, acts by suppressing the use of early, alternative poly(A) sites, thereby preventing the accumulation of non-functional truncated proteins. Mechanistically, associates with the phosphorylated C-terminal heptapeptide repeat domain (CTD) of the largest RNA polymerase II subunit (POLR2A), and subsequently binds nascent RNA upstream of early polyadenylation sites to prevent premature mRNA transcript cleavage and polyadenylation. Independently of SCAF4, also acts as a positive regulator of transcript elongation. The chain is SR-related and CTD-associated factor 8 from Mus musculus (Mouse).